The sequence spans 455 residues: Dihydrolipoyllysine-residue succinyltransferase component of 2-oxoglutarate dehydrogenase complex, mitochondrial (455 aa).

Residues 1–68 constitute a mitochondrion transit peptide; the sequence is MLSRSRCVSR…RFFRTTAVCK (68 aa). A Lipoyl-binding domain is found at 71-145; that stretch reads VITVKTPAFA…EGGTPLFTLR (75 aa). Phosphoserine is present on Ser-82. Lys-111 is modified (N6-lipoyllysine). The span at 153–173 shows a compositional bias: low complexity; sequence KAKPAEAPAAAAPKAEPAVSA. The disordered stretch occupies residues 153 to 214; sequence KAKPAEAPAA…KPTAAPPVAE (62 aa). Lys-155 is subject to N6-acetyllysine. The segment covering 174-195 has biased composition (pro residues); it reads VPPPPAASIPTQMPPVPSPPQP. The catalytic stretch occupies residues 221 to 453; it reads LRAEHREKMN…AVEDPRVLLL (233 aa). An N6-acetyllysine mark is found at Lys-269, Lys-274, Lys-275, Lys-279, and Lys-309. Catalysis depends on residues His-426 and Asp-430.

It belongs to the 2-oxoacid dehydrogenase family. The 2-oxoglutarate dehydrogenase complex is composed of OGDH (2-oxoglutarate dehydrogenase; E1), DLST (dihydrolipoamide succinyltransferase; E2), DLD (dihydrolipoamide dehydrogenase; E3) and the assembly factor KGD4. It contains multiple copies of the three enzymatic components (E1, E2 and E3). In the nucleus, the 2-oxoglutarate dehydrogenase complex associates with KAT2A. Interacts with ABHD11; this interaction maintains the functional lipoylation of the 2-oxoglutarate dehydrogenase complex. It depends on (R)-lipoate as a cofactor.

The protein resides in the mitochondrion matrix. Its subcellular location is the nucleus. The catalysed reaction is N(6)-[(R)-dihydrolipoyl]-L-lysyl-[protein] + succinyl-CoA = N(6)-[(R)-S(8)-succinyldihydrolipoyl]-L-lysyl-[protein] + CoA. It functions in the pathway amino-acid degradation; L-lysine degradation via saccharopine pathway; glutaryl-CoA from L-lysine: step 6/6. Its pathway is carbohydrate metabolism; tricarboxylic acid cycle. Its function is as follows. Dihydrolipoamide succinyltransferase (E2) component of the 2-oxoglutarate dehydrogenase complex. The 2-oxoglutarate dehydrogenase complex catalyzes the overall conversion of 2-oxoglutarate to succinyl-CoA and CO(2). The 2-oxoglutarate dehydrogenase complex is mainly active in the mitochondrion. A fraction of the 2-oxoglutarate dehydrogenase complex also localizes in the nucleus and is required for lysine succinylation of histones: associates with KAT2A on chromatin and provides succinyl-CoA to histone succinyltransferase KAT2A. The protein is Dihydrolipoyllysine-residue succinyltransferase component of 2-oxoglutarate dehydrogenase complex, mitochondrial of Sus scrofa (Pig).